Reading from the N-terminus, the 227-residue chain is Glutathione S-transferase U18 (227 aa).

In terms of domain architecture, GST N-terminal spans 4 to 83; the sequence is EDVKLIGSWA…YIDEAWNSSG (80 aa). Glutathione is bound by residues 14 to 15, 40 to 41, 54 to 55, and 67 to 68; these read SV, SK, KM, and ES. Residues 90 to 221 enclose the GST C-terminal domain; sequence HPYDRAIARF…TKLAEFARKL (132 aa).

It belongs to the GST superfamily. Tau family.

It localises to the cytoplasm. It is found in the cytosol. It catalyses the reaction RX + glutathione = an S-substituted glutathione + a halide anion + H(+). May be involved in the conjugation of reduced glutathione to a wide number of exogenous and endogenous hydrophobic electrophiles and have a detoxification role against certain herbicides. The polypeptide is Glutathione S-transferase U18 (GSTU18) (Arabidopsis thaliana (Mouse-ear cress)).